The chain runs to 359 residues: Cytosolic sulfotransferase 15 (359 aa).

3'-phosphoadenylyl sulfate is bound at residue 101–106; the sequence is KSGTTW. His-168 serves as the catalytic Proton acceptor. Residues Arg-190, Ser-198, Tyr-256, and 322–324 each bind 3'-phosphoadenylyl sulfate; that span reads RKG.

This sequence belongs to the sulfotransferase 1 family. Expressed in leaves.

The protein localises to the cytoplasm. It carries out the reaction a 12-hydroxyjasmonate + 3'-phosphoadenylyl sulfate = a 12-sulfojasmonate + adenosine 3',5'-bisphosphate + H(+). In terms of biological role, sulfotransferase that utilizes 3'-phospho-5'-adenylyl sulfate (PAPS) as sulfonate donor to specifically catalyze the sulfate conjugation of hydroxyjasmonates, with a preference for 12-hydroxyjasmonate over 11-hydroxyjasmonate. No activity with 12-hydroxyjasmonic acid methyl ester, cucurbic acid, 7-iso-cucurbic acid, 6-epi-cucurbic acid, 6-epi-7-iso-cucurbic acid and their methyl esters, prostaglandin E2, arachidonyl alcohol and 11-eicosenol. In Arabidopsis thaliana (Mouse-ear cress), this protein is Cytosolic sulfotransferase 15 (SOT15).